Consider the following 60-residue polypeptide: Large ribosomal subunit protein bL33 (60 aa).

Belongs to the bacterial ribosomal protein bL33 family.

This is Large ribosomal subunit protein bL33 from Flavobacterium psychrophilum (strain ATCC 49511 / DSM 21280 / CIP 103535 / JIP02/86).